The following is a 211-amino-acid chain: Large ribosomal subunit protein uL4 (211 aa).

The segment at 50 to 77 is disordered; the sequence is STLTKGEVSGGGKKPYKQKHTGKARQGS. A compositionally biased stretch (basic residues) spans 63 to 72; it reads KPYKQKHTGK.

Belongs to the universal ribosomal protein uL4 family. Part of the 50S ribosomal subunit.

One of the primary rRNA binding proteins, this protein initially binds near the 5'-end of the 23S rRNA. It is important during the early stages of 50S assembly. It makes multiple contacts with different domains of the 23S rRNA in the assembled 50S subunit and ribosome. Functionally, forms part of the polypeptide exit tunnel. The polypeptide is Large ribosomal subunit protein uL4 (Mycoplasma genitalium (strain ATCC 33530 / DSM 19775 / NCTC 10195 / G37) (Mycoplasmoides genitalium)).